Reading from the N-terminus, the 171-residue chain is S-ribosylhomocysteine lyase (171 aa).

The Fe cation site is built by histidine 54, histidine 58, and cysteine 128.

The protein belongs to the LuxS family. As to quaternary structure, homodimer. Requires Fe cation as cofactor.

The enzyme catalyses S-(5-deoxy-D-ribos-5-yl)-L-homocysteine = (S)-4,5-dihydroxypentane-2,3-dione + L-homocysteine. In terms of biological role, involved in the synthesis of autoinducer 2 (AI-2) which is secreted by bacteria and is used to communicate both the cell density and the metabolic potential of the environment. The regulation of gene expression in response to changes in cell density is called quorum sensing. Catalyzes the transformation of S-ribosylhomocysteine (RHC) to homocysteine (HC) and 4,5-dihydroxy-2,3-pentadione (DPD). The protein is S-ribosylhomocysteine lyase of Escherichia coli O81 (strain ED1a).